The chain runs to 102 residues: Cytochrome c3 (102 aa).

16 residues coordinate heme c: His26, His29, Cys34, Cys37, His38, His39, Cys50, Cys55, His56, His73, Cys81, Cys84, His85, Cys95, Cys98, and His99.

The cofactor is heme.

It localises to the periplasm. In terms of biological role, participates in sulfate respiration coupled with phosphorylation by transferring electrons from the enzyme dehydrogenase to ferredoxin. In Desulfovibrio desulfuricans, this protein is Cytochrome c3.